Reading from the N-terminus, the 95-residue chain is HssA/B-like protein 45 (95 aa).

The interval 1–31 is disordered; sequence MTLFSSISSISNPMTSSKSSIASFGSGTSMS.

This sequence belongs to the hssA/B family.

The polypeptide is HssA/B-like protein 45 (hssl45) (Dictyostelium discoideum (Social amoeba)).